The primary structure comprises 147 residues: MKLILKENVDNLGHIGDIVKVAPGYARNFLLPKGFAIEATEKNAKALEHAKRHLEYKKNKVLEAAKQLAAKIEGLSLSIAHQAGADDRLFGAVTNMELAEQLKANGIEVDRKRIVLAEPIKQLGDFTATVKIHPEVSATLKVAVTKA.

This sequence belongs to the bacterial ribosomal protein bL9 family.

Binds to the 23S rRNA. The protein is Large ribosomal subunit protein bL9 of Geobacter sp. (strain M21).